A 191-amino-acid chain; its full sequence is Protein LURP-one-related 6 (191 aa).

The protein belongs to the LOR family.

Its function is as follows. Might be related to the phospholipid scramblase and tubby-like superfamily of membrane tethered transcription factors. This Arabidopsis thaliana (Mouse-ear cress) protein is Protein LURP-one-related 6.